A 493-amino-acid polypeptide reads, in one-letter code: MADQISGEKPAGVNRFALQCAIVASIVSIIFGYDTGVMSGAMVFIEEDLKTNDVQIEVLTGILNLCALVGSLLAGRTSDIIGRRYTIVLASILFMLGSILMGWGPNYPVLLSGRCTAGLGVGFALMVAPVYSAEIATASHRGLLASLPHLCISIGILLGYIVNYFFSKLPMHIGWRLMLGIAAVPSLVLAFGILKMPESPRWLIMQGRLKEGKEILELVSNSPEEAELRFQDIKAAAGIDPKCVDDVVKMEGKKTHGEGVWKELILRPTPAVRRVLLTALGIHFFQHASGIEAVLLYGPRIFKKAGITTKDKLFLVTIGVGIMKTTFIFTATLLLDKVGRRKLLLTSVGGMVIALTMLGFGLTMAQNAGGKLAWALVLSIVAAYSFVAFFSIGLGPITWVYSSEVFPLKLRAQGASLGVAVNRVMNATVSMSFLSLTSAITTGGAFFMFAGVAAVAWNFFFFLLPETKGKSLEEIEALFQRDGDKVRGENGAA.

The next 12 helical transmembrane spans lie at 25–45, 54–74, 85–105, 116–136, 142–162, 177–197, 275–295, 313–333, 343–363, 372–392, 414–434, and 444–464; these read SIVS…MVFI, VQIE…SLLA, YTIV…GWGP, TAGL…AEIA, GLLA…GYIV, LMLG…LKMP, VLLT…EAVL, LFLV…TATL, LLLT…FGLT, LAWA…FFSI, GASL…MSFL, and GAFF…FFLL.

This sequence belongs to the major facilitator superfamily. Sugar transporter (TC 2.A.1.1) family.

The protein localises to the membrane. Functionally, plasma membrane sugar-proton symporter. The polypeptide is Probable polyol transporter 6 (PLT6) (Arabidopsis thaliana (Mouse-ear cress)).